We begin with the raw amino-acid sequence, 1113 residues long: Protein translocase subunit SecA (1113 aa).

ATP-binding positions include glutamine 175, 193–197, and aspartate 694; that span reads GEGKT. The span at 1042–1072 shows a compositional bias: basic and acidic residues; that stretch reads RHAAEQRTDMSKYRTQKDDIEAQQKAQRDAA. The disordered stretch occupies residues 1042–1113; it reads RHAAEQRTDM…KFKQCHGRNL (72 aa). 4 residues coordinate Zn(2+): cysteine 1097, cysteine 1099, cysteine 1108, and histidine 1109. Residues 1103-1113 are compositionally biased toward basic residues; the sequence is KKFKQCHGRNL.

This sequence belongs to the SecA family. Monomer and homodimer. Part of the essential Sec protein translocation apparatus which comprises SecA, SecYEG and auxiliary proteins SecDF. Other proteins may also be involved. Requires Zn(2+) as cofactor.

The protein resides in the cell inner membrane. The protein localises to the cytoplasm. It carries out the reaction ATP + H2O + cellular proteinSide 1 = ADP + phosphate + cellular proteinSide 2.. Part of the Sec protein translocase complex. Interacts with the SecYEG preprotein conducting channel. Has a central role in coupling the hydrolysis of ATP to the transfer of proteins into and across the cell membrane, serving as an ATP-driven molecular motor driving the stepwise translocation of polypeptide chains across the membrane. The chain is Protein translocase subunit SecA from Porphyromonas gingivalis (strain ATCC 33277 / DSM 20709 / CIP 103683 / JCM 12257 / NCTC 11834 / 2561).